We begin with the raw amino-acid sequence, 489 residues long: Homoserine O-acetyltransferase (489 aa).

The 370-residue stretch at 69 to 438 (LLLCHALSGS…AEGHDGFLLE (370 aa)) folds into the AB hydrolase-1 domain. Serine 163 acts as the Nucleophile in catalysis. Residues 255–329 (ASRHPYPDRL…QTTDSSSLNQ (75 aa)) form a disordered region. Basic and acidic residues predominate over residues 280–290 (EGNRNRRERPC). The segment covering 299-329 (SESALNSPASSVSSLPSLGASQTTDSSSLNQ) has biased composition (low complexity). Catalysis depends on residues aspartate 403 and histidine 432.

This sequence belongs to the AB hydrolase superfamily. MetX family.

The protein localises to the cytoplasm. The catalysed reaction is L-homoserine + acetyl-CoA = O-acetyl-L-homoserine + CoA. It participates in amino-acid biosynthesis; L-methionine biosynthesis via de novo pathway; O-acetyl-L-homoserine from L-homoserine: step 1/1. In terms of biological role, commits homoserine to the methionine biosynthesis pathway by catalyzing its O-acetylation. The polypeptide is Homoserine O-acetyltransferase (met6) (Schizosaccharomyces pombe (strain 972 / ATCC 24843) (Fission yeast)).